Here is a 566-residue protein sequence, read N- to C-terminus: DNA helicase/primase (566 aa).

Zn(2+)-binding residues include cysteine 17, cysteine 20, cysteine 36, and cysteine 39. The segment at 17 to 39 adopts a C4-like; zinc ribbon fold zinc-finger fold; that stretch reads CDNCGSSDGNSLFSDGHTFCYVC. Positions 151–238 constitute a Toprim domain; that stretch reads KKIVVTEGEI…RVAVLPCKDA (88 aa). Residues glutamate 157, aspartate 207, and aspartate 237 each contribute to the Mg(2+) site. The region spanning 281–548 is the SF4 helicase domain; sequence SEESVGLLFS…TGWLEPSSYS (268 aa). An ATP-binding site is contributed by 312 to 319; it reads SGSGMGKS. The segment at 543–566 is disordered; that stretch reads EPSSYSGEEESHSESTDWSNDTDF. Residues 550-566 form a binding to viral DNA polymerase region; the sequence is EEESHSESTDWSNDTDF.

This sequence belongs to the Teseptimavirus DNA helicase/primase family. Homohexamer. Assembles as a hexamer onto linear or circular ssDNA in the presence of ATP or dTTP. Present in a mixture of heptamers and hexamers in the absence of DNA. Interacts (via C-terminus) with the viral DNA polymerase that is bound to DNA; this interaction is essential to initiate leading-strand DNA synthesis. The priming complex consists of 2 DNA polymerases and 1 helicase-primase hexamer that assemble on the DNA template. Interacts with the single-stranded DNA-binding protein. Part of the replicase complex that includes the DNA polymerase, thioredoxin, the primase/helicase and the single-stranded DNA binding protein. Mg(2+) is required as a cofactor.

The catalysed reaction is ATP + H2O = ADP + phosphate + H(+). Its function is as follows. ATP-dependent DNA helicase and primase essential for viral DNA replication and recombination. The helicase moves 5' -&gt; 3' on the lagging strand template, unwinding the DNA duplex ahead of the leading strand polymerase at the replication fork and generating ssDNA for both leading and lagging strand synthesis. ATP or dTTP hydrolysis propels each helicase domain to translocate 2 nt per step sequentially along DNA. Mediates strand transfer when a joint molecule is available and participates in recombinational DNA repair through its role in strand exchange. Primase activity synthesizes short RNA primers at the sequence 5'-GTC-3' on the lagging strand that the polymerase elongates using dNTPs and providing the primase is still present. The sequence is that of DNA helicase/primase from Escherichia phage T7 (Bacteriophage T7).